Here is a 374-residue protein sequence, read N- to C-terminus: tRNA-specific 2-thiouridylase MnmA (374 aa).

Residues 12–19 and methionine 38 each bind ATP; that span reads GMSGGVDS. The tract at residues 98–100 is interaction with target base in tRNA; the sequence is NPD. Cysteine 103 (nucleophile) is an active-site residue. A disulfide bridge links cysteine 103 with cysteine 202. Glycine 128 provides a ligand contact to ATP. Residues 152–154 are interaction with tRNA; the sequence is KDQ. The Cysteine persulfide intermediate role is filled by cysteine 202. Positions 316 to 317 are interaction with tRNA; it reads RY.

This sequence belongs to the MnmA/TRMU family.

The protein localises to the cytoplasm. It catalyses the reaction S-sulfanyl-L-cysteinyl-[protein] + uridine(34) in tRNA + AH2 + ATP = 2-thiouridine(34) in tRNA + L-cysteinyl-[protein] + A + AMP + diphosphate + H(+). In terms of biological role, catalyzes the 2-thiolation of uridine at the wobble position (U34) of tRNA, leading to the formation of s(2)U34. In Vibrio campbellii (strain ATCC BAA-1116), this protein is tRNA-specific 2-thiouridylase MnmA.